We begin with the raw amino-acid sequence, 324 residues long: Chlorophyllase-1 (324 aa).

The short motif at 136–140 (GHSRG) is the GXSXG element. The active-site Nucleophile is Ser-138. Catalysis depends on charge relay system residues Asp-168 and His-243.

This sequence belongs to the AB hydrolase superfamily. Lipase family. In terms of tissue distribution, expressed in seedlings, leaves, flowers and siliques, but not in roots.

It is found in the cytoplasm. The protein localises to the cytosol. The catalysed reaction is a chlorophyll + H2O = a chlorophyllide + phytol + H(+). The enzyme catalyses chlorophyll a + H2O = phytol + chlorophyllide a + H(+). It functions in the pathway porphyrin-containing compound metabolism; chlorophyll degradation. Functionally, catalyzes the hydrolysis of ester bond in chlorophyll to yield chlorophyllide and phytol. Shows a preferential activity toward chlorophyll a. Does not seem to be required for chlorophyll degradation during senescence. May modulate the balance between different plant defense pathways. The chain is Chlorophyllase-1 from Arabidopsis thaliana (Mouse-ear cress).